Reading from the N-terminus, the 453-residue chain is uncharacterized protein (453 aa).

This is an uncharacterized protein from Galliformes (FAdV-1).